Here is a 367-residue protein sequence, read N- to C-terminus: uncharacterized protein (367 aa).

Belongs to the mimivirus L17x/L18x family.

This is an uncharacterized protein from Acanthamoeba polyphaga (Amoeba).